A 199-amino-acid chain; its full sequence is Cytochrome c-type cyt cy (199 aa).

A helical membrane pass occupies residues 7–27 (ITKIGVTLFAVALFYGFIYML). Residues 69–80 (AAETAEAAAPAE) are compositionally biased toward low complexity. Residues 69–93 (AAETAEAAAPAEPAAPPPPAYVEVD) are disordered. Residues C112, C115, H116, and M148 each contribute to the heme c site.

Post-translationally, binds 1 heme c group covalently per subunit.

The protein localises to the cell membrane. Functionally, electron transfer pathways that operates during photosynthesis. This chain is Cytochrome c-type cyt cy (cycY), found in Rhodobacter capsulatus (strain ATCC BAA-309 / NBRC 16581 / SB1003).